Reading from the N-terminus, the 329-residue chain is Phenylalanine--tRNA ligase alpha subunit (329 aa).

The protein belongs to the class-II aminoacyl-tRNA synthetase family. Phe-tRNA synthetase alpha subunit type 1 subfamily. As to quaternary structure, tetramer of two alpha and two beta subunits. It depends on Mg(2+) as a cofactor.

It is found in the cytoplasm. It catalyses the reaction tRNA(Phe) + L-phenylalanine + ATP = L-phenylalanyl-tRNA(Phe) + AMP + diphosphate + H(+). This Buchnera aphidicola subsp. Schizaphis graminum (strain Sg) protein is Phenylalanine--tRNA ligase alpha subunit (pheS).